A 292-amino-acid chain; its full sequence is MFNRVVLFLLTNFAVLILAGIVMSVLGVNPAQMSGLLVMAAIFGFGGSFISLLLSKFMAKRSTGAQVITEPRTQTERWLVDTVRRQAQAAGIGMPEVAIYDGPEINAFATGANRNNALVAVSTGLLQHMREDEAEAVLGHEIAHIANGDMVTMALLQGVLNTFVIVLARVVGGIIDSALSGNRDSGRGFAYYIIVFVLEMVFGLFATMIAMWFSRRREFRADAGGAQLAGRNKMIAALERLSLNHGQNTLPSQVQAFGISGGVGEGLRRLFLSHPPLTERIAALRASNGTAM.

A run of 2 helical transmembrane segments spans residues 5 to 25 and 34 to 54; these read VVLFLLTNFAVLILAGIVMSV and SGLLVMAAIFGFGGSFISLLL. A Zn(2+)-binding site is contributed by His-140. Residue Glu-141 is part of the active site. Zn(2+) is bound at residue His-144. Helical transmembrane passes span 155-175 and 193-213; these read LLQGVLNTFVIVLARVVGGII and IIVFVLEMVFGLFATMIAMWF. Glu-218 is a Zn(2+) binding site.

This sequence belongs to the peptidase M48B family. Zn(2+) serves as cofactor.

The protein localises to the cell inner membrane. The sequence is that of Protease HtpX from Xanthomonas campestris pv. campestris (strain B100).